A 72-amino-acid polypeptide reads, in one-letter code: Translation initiation factor IF-1 (72 aa).

The 72-residue stretch at 1–72 (MAKEDNIEMQ…SKGRIVFRSR (72 aa)) folds into the S1-like domain.

It belongs to the IF-1 family. As to quaternary structure, component of the 30S ribosomal translation pre-initiation complex which assembles on the 30S ribosome in the order IF-2 and IF-3, IF-1 and N-formylmethionyl-tRNA(fMet); mRNA recruitment can occur at any time during PIC assembly.

Its subcellular location is the cytoplasm. Its function is as follows. One of the essential components for the initiation of protein synthesis. Stabilizes the binding of IF-2 and IF-3 on the 30S subunit to which N-formylmethionyl-tRNA(fMet) subsequently binds. Helps modulate mRNA selection, yielding the 30S pre-initiation complex (PIC). Upon addition of the 50S ribosomal subunit IF-1, IF-2 and IF-3 are released leaving the mature 70S translation initiation complex. This Shewanella loihica (strain ATCC BAA-1088 / PV-4) protein is Translation initiation factor IF-1.